Reading from the N-terminus, the 122-residue chain is Head fiber dimeric protein (122 aa).

As to quaternary structure, homodimer. Interacts with the major capsid protein.

The protein resides in the virion. Its function is as follows. Forms short fibers at the surface of the viral capsid. The chain is Head fiber dimeric protein from Bacteroides intestinalis (Bacteroides phage PhiCrAss001).